The following is a 388-amino-acid chain: Processive diacylglycerol beta-glucosyltransferase (388 aa).

It belongs to the glycosyltransferase 28 family. UgtP subfamily.

It localises to the cell membrane. The enzyme catalyses a 1,2-diacyl-3-O-(beta-D-glucopyranosyl)-sn-glycerol + UDP-alpha-D-glucose = a 1,2-diacyl-3-O-(beta-D-Glc-(1-&gt;6)-beta-D-Glc)-sn-glycerol + UDP + H(+). It catalyses the reaction a 1,2-diacyl-3-O-(beta-D-Glc-(1-&gt;6)-beta-D-Glc)-sn-glycerol + UDP-alpha-D-glucose = a 1,2-diacyl-3-O-(beta-D-Glc-(1-&gt;6)-beta-D-Glc-(1-&gt;6)-beta-D-Glc)-sn-glycerol + UDP + H(+). It carries out the reaction a 1,2-diacyl-sn-glycerol + UDP-alpha-D-glucose = a 1,2-diacyl-3-O-(beta-D-glucopyranosyl)-sn-glycerol + UDP + H(+). It functions in the pathway glycolipid metabolism; diglucosyl-diacylglycerol biosynthesis. In terms of biological role, processive glucosyltransferase involved in the biosynthesis of both the bilayer- and non-bilayer-forming membrane glucolipids. Is able to successively transfer up to three glucosyl residues to diacylglycerol (DAG), thereby catalyzing the formation of beta-monoglucosyl-DAG (3-O-(beta-D-glucopyranosyl)-1,2-diacyl-sn-glycerol), beta-diglucosyl-DAG (3-O-(beta-D-glucopyranosyl-beta-(1-&gt;6)-D-glucopyranosyl)-1,2-diacyl-sn-glycerol) and beta-triglucosyl-DAG (3-O-(beta-D-glucopyranosyl-beta-(1-&gt;6)-D-glucopyranosyl-beta-(1-&gt;6)-D-glucopyranosyl)-1,2-diacyl-sn-glycerol). Beta-diglucosyl-DAG is the predominant glycolipid found in Bacillales and is also used as a membrane anchor for lipoteichoic acid (LTA). The polypeptide is Processive diacylglycerol beta-glucosyltransferase (Bacillus mycoides (strain KBAB4) (Bacillus weihenstephanensis)).